The primary structure comprises 102 residues: Small ribosomal subunit protein uS10 (102 aa).

The protein belongs to the universal ribosomal protein uS10 family. Part of the 30S ribosomal subunit.

Functionally, involved in the binding of tRNA to the ribosomes. The polypeptide is Small ribosomal subunit protein uS10 (Exiguobacterium sibiricum (strain DSM 17290 / CCUG 55495 / CIP 109462 / JCM 13490 / 255-15)).